The chain runs to 95 residues: MTTKLSESEIQSALRERSAWTVVNGKLHREYKFADFIHAFGFMTCAALSAEAMNHHPEWFNVYNRLTIDLTTHDAGGITAKDFQLAAKLDALAAG.

This sequence belongs to the pterin-4-alpha-carbinolamine dehydratase family.

It carries out the reaction (4aS,6R)-4a-hydroxy-L-erythro-5,6,7,8-tetrahydrobiopterin = (6R)-L-erythro-6,7-dihydrobiopterin + H2O. This is Putative pterin-4-alpha-carbinolamine dehydratase from Solibacter usitatus (strain Ellin6076).